A 907-amino-acid chain; its full sequence is Protein translocase subunit SecA (907 aa).

ATP is bound by residues Q87, 105 to 109, and D510; that span reads GEGKT. 4 residues coordinate Zn(2+): C892, C894, C903, and H904.

This sequence belongs to the SecA family. As to quaternary structure, monomer and homodimer. Part of the essential Sec protein translocation apparatus which comprises SecA, SecYEG and auxiliary proteins SecDF-YajC and YidC. Zn(2+) serves as cofactor.

It localises to the cell inner membrane. It is found in the cytoplasm. The enzyme catalyses ATP + H2O + cellular proteinSide 1 = ADP + phosphate + cellular proteinSide 2.. Part of the Sec protein translocase complex. Interacts with the SecYEG preprotein conducting channel. Has a central role in coupling the hydrolysis of ATP to the transfer of proteins into and across the cell membrane, serving both as a receptor for the preprotein-SecB complex and as an ATP-driven molecular motor driving the stepwise translocation of polypeptide chains across the membrane. The sequence is that of Protein translocase subunit SecA from Acinetobacter baumannii (strain ATCC 17978 / DSM 105126 / CIP 53.77 / LMG 1025 / NCDC KC755 / 5377).